Here is a 210-residue protein sequence, read N- to C-terminus: Holliday junction resolvase RecU (210 aa).

Residues Thr93, Asp95, Glu108, and Gln127 each coordinate Mg(2+).

The protein belongs to the RecU family. The cofactor is Mg(2+).

The protein localises to the cytoplasm. It carries out the reaction Endonucleolytic cleavage at a junction such as a reciprocal single-stranded crossover between two homologous DNA duplexes (Holliday junction).. Functionally, endonuclease that resolves Holliday junction intermediates in genetic recombination. Cleaves mobile four-strand junctions by introducing symmetrical nicks in paired strands. Promotes annealing of linear ssDNA with homologous dsDNA. Required for DNA repair, homologous recombination and chromosome segregation. The chain is Holliday junction resolvase RecU from Lactobacillus helveticus (strain DPC 4571).